The chain runs to 178 residues: Natriuretic and helokinestatin peptides (178 aa).

Positions 1 to 25 (MNPRLACSTWLPLLLVLFTLDQGRA) are cleaved as a signal peptide. Propeptides lie at residues 26–58 (NPVERGQEYRSLSKRFDDDSTELILEPRASEEN), 69–73 (ASDEN), 85–89 (ASDEN), 103–112 (ASEQKGPPFN), and 123–146 (AANENALRKLIKRSFERSPGRNKR). Disordered regions lie at residues 69 to 107 (ASDENVPPAYVPLVPRASDENVPPPPLQMPLIPRASEQK) and 135 to 155 (RSFERSPGRNKRLSPGDGCFG). A disulfide bridge links Cys-153 with Cys-169.

The protein in the C-terminal section; belongs to the natriuretic peptide family. Expressed by the venom gland.

It localises to the secreted. Helokinestatins antagonize the vasodilatory actions of bradykinin at the B2 bradykinin receptor (BDKRB2), with helokinestatin-1 being the most potent antagonist. Functionally, exhibits hypotensive and vasodepressor activities, possibly by targeting natriuretic peptide receptors NPR1 and NPR2. This chain is Natriuretic and helokinestatin peptides, found in Heloderma suspectum cinctum (Banded Gila monster).